The primary structure comprises 386 residues: MSAATVGKPIKCIAAVAYDAKKPLSVEEITVDAPKAHEVRIKIEYTAVCHTDAYTLSGSDPEGLFPCVLGHEGAGIVESVGDDVITVKPGDHVIALYTAECGKCKFCTSGKTNLCGAVRATQGKGVMPDGTTRFHNAKGEDIYHFMGCSTFSEYTVVADVSVVAIDPKAPLDAACLLGCGVTTGFGAALKTANVQKGDTVAVFGCGTVGLSVIQGAKLRGASKIIAIDINNKKKQYCSQFGATDFVNPKEDLAKDQTIVEKLIEMTDGGLDFTFDCTGNTKIMRDALEACHKGWGQSIIIGVAAAGEEISTRPFQLVTGRVWKGSAFGGIKGRSEMGGLIKDYQKGALKVEEFITHRRPFKEINQAFEDLHNGDCLRTVLKSDEIK.

Ser-2 bears the N-acetylserine mark. A Zn(2+)-binding site is contributed by Cys-49. His-50 contacts NAD(+). 7 residues coordinate Zn(2+): His-71, Glu-72, Cys-101, Cys-104, Cys-107, Cys-115, and Cys-179. Residues 204–209 (GCGTVG), Asp-228, 300–302 (IGV), and 325–327 (SAF) each bind NAD(+).

Belongs to the zinc-containing alcohol dehydrogenase family. Class-III subfamily. It depends on Zn(2+) as a cofactor.

The protein resides in the cytoplasm. The protein localises to the mitochondrion. It carries out the reaction a primary alcohol + NAD(+) = an aldehyde + NADH + H(+). The enzyme catalyses a secondary alcohol + NAD(+) = a ketone + NADH + H(+). It catalyses the reaction S-(hydroxymethyl)glutathione + NADP(+) = S-formylglutathione + NADPH + H(+). The catalysed reaction is S-(hydroxymethyl)glutathione + NAD(+) = S-formylglutathione + NADH + H(+). It carries out the reaction S-nitrosoglutathione + NADH + H(+) = S-(hydroxysulfenamide)glutathione + NAD(+). Its function is as follows. Oxidizes long-chain alcohols and, in the presence of glutathione, is able to oxidize formaldehyde. Is responsible for yeast resistance to formaldehyde. Also acts as a S-nitroso-glutathione reductase by catalyzing the NADH-dependent reduction of S-nitrosoglutathione, thereby regulating protein S-nitrosylation. The polypeptide is S-(hydroxymethyl)glutathione dehydrogenase (SFA1) (Saccharomyces cerevisiae (strain ATCC 204508 / S288c) (Baker's yeast)).